Consider the following 212-residue polypeptide: Ribonuclease HII (212 aa).

The 206-residue stretch at 1-206 folds into the RNase H type-2 domain; the sequence is MILVGIDEAG…LQDIAPNYYI (206 aa). The a divalent metal cation site is built by aspartate 7, glutamate 8, and aspartate 104.

This sequence belongs to the RNase HII family. Requires Mn(2+) as cofactor. Mg(2+) serves as cofactor.

The protein resides in the cytoplasm. The enzyme catalyses Endonucleolytic cleavage to 5'-phosphomonoester.. Endonuclease that specifically degrades the RNA of RNA-DNA hybrids. The chain is Ribonuclease HII from Sulfolobus acidocaldarius (strain ATCC 33909 / DSM 639 / JCM 8929 / NBRC 15157 / NCIMB 11770).